The following is an 85-amino-acid chain: UPF0297 protein CPR_1749 (85 aa).

Belongs to the UPF0297 family.

The sequence is that of UPF0297 protein CPR_1749 from Clostridium perfringens (strain SM101 / Type A).